We begin with the raw amino-acid sequence, 170 residues long: Small ribosomal subunit protein uS9 (170 aa).

It belongs to the universal ribosomal protein uS9 family.

In Rhodococcus opacus (strain B4), this protein is Small ribosomal subunit protein uS9.